We begin with the raw amino-acid sequence, 75 residues long: MKLLLFTALVLVVISLIEVEAENERACIPLEKECTKTPGNCCSGLRCDCYRRFEQGVAKGIQCWCIEKDVTYKGV.

Positions 1-21 (MKLLLFTALVLVVISLIEVEA) are cleaved as a signal peptide. Residues 22-25 (ENER) constitute a propeptide that is removed on maturation.

Belongs to the neurotoxin 19 (CSTX) family. 06 (U6-Lctx) subfamily. In terms of processing, contains 4 disulfide bonds. As to expression, expressed by the venom gland.

Its subcellular location is the secreted. The chain is U6-lycotoxin-Ls1e from Lycosa singoriensis (Wolf spider).